The primary structure comprises 204 residues: Probable nicotinate-nucleotide adenylyltransferase (204 aa).

The protein belongs to the NadD family.

It carries out the reaction nicotinate beta-D-ribonucleotide + ATP + H(+) = deamido-NAD(+) + diphosphate. Its pathway is cofactor biosynthesis; NAD(+) biosynthesis; deamido-NAD(+) from nicotinate D-ribonucleotide: step 1/1. In terms of biological role, catalyzes the reversible adenylation of nicotinate mononucleotide (NaMN) to nicotinic acid adenine dinucleotide (NaAD). The polypeptide is Probable nicotinate-nucleotide adenylyltransferase (Clostridium beijerinckii (strain ATCC 51743 / NCIMB 8052) (Clostridium acetobutylicum)).